Reading from the N-terminus, the 360-residue chain is Peptide chain release factor 1 (360 aa).

N5-methylglutamine is present on Q234.

This sequence belongs to the prokaryotic/mitochondrial release factor family. Methylated by PrmC. Methylation increases the termination efficiency of RF1.

It localises to the cytoplasm. Its function is as follows. Peptide chain release factor 1 directs the termination of translation in response to the peptide chain termination codons UAG and UAA. In Clostridium botulinum (strain Eklund 17B / Type B), this protein is Peptide chain release factor 1.